The sequence spans 191 residues: Adenylate kinase (191 aa).

Residue 10–15 participates in ATP binding; sequence AAGKGT. Positions 30–59 are NMP; that stretch reads STGDMLRAAIASGSELGQRVKGVLDRGELV. Residues Thr31, Arg36, 57–59, 85–88, and Gln92 contribute to the AMP site; these read ELV and GFPR. The LID stretch occupies residues 126–136; sequence KRFEEQGRPDD. Arg127 serves as a coordination point for ATP. Arg133 and Arg144 together coordinate AMP. Gly172 lines the ATP pocket.

It belongs to the adenylate kinase family. In terms of assembly, monomer.

The protein resides in the cytoplasm. It carries out the reaction AMP + ATP = 2 ADP. Its pathway is purine metabolism; AMP biosynthesis via salvage pathway; AMP from ADP: step 1/1. In terms of biological role, catalyzes the reversible transfer of the terminal phosphate group between ATP and AMP. Plays an important role in cellular energy homeostasis and in adenine nucleotide metabolism. The protein is Adenylate kinase of Caulobacter vibrioides (strain ATCC 19089 / CIP 103742 / CB 15) (Caulobacter crescentus).